Consider the following 221-residue polypeptide: Cytidylate kinase 1 (221 aa).

7-15 (GPSASGKSS) lines the ATP pocket.

The protein belongs to the cytidylate kinase family. Type 1 subfamily.

The protein localises to the cytoplasm. The catalysed reaction is CMP + ATP = CDP + ADP. It carries out the reaction dCMP + ATP = dCDP + ADP. This chain is Cytidylate kinase 1, found in Borreliella burgdorferi (strain ATCC 35210 / DSM 4680 / CIP 102532 / B31) (Borrelia burgdorferi).